Reading from the N-terminus, the 138-residue chain is 1,4-dihydroxy-2-naphthoyl-CoA hydrolase (138 aa).

The active site involves Asp-13.

The protein belongs to the 4-hydroxybenzoyl-CoA thioesterase family. DHNA-CoA hydrolase subfamily.

The catalysed reaction is 1,4-dihydroxy-2-naphthoyl-CoA + H2O = 1,4-dihydroxy-2-naphthoate + CoA + H(+). The protein operates within cofactor biosynthesis; phylloquinone biosynthesis. It participates in quinol/quinone metabolism; 1,4-dihydroxy-2-naphthoate biosynthesis; 1,4-dihydroxy-2-naphthoate from chorismate: step 7/7. Its function is as follows. Catalyzes the hydrolysis of 1,4-dihydroxy-2-naphthoyl-CoA (DHNA-CoA) to 1,4-dihydroxy-2-naphthoate (DHNA), a reaction involved in phylloquinone (vitamin K1) biosynthesis. In Microcystis aeruginosa (strain NIES-843 / IAM M-2473), this protein is 1,4-dihydroxy-2-naphthoyl-CoA hydrolase.